Consider the following 299-residue polypeptide: uncharacterized protein (299 aa).

A run of 8 helical transmembrane segments spans residues 13-33, 36-56, 79-99, 112-132, 151-171, 201-221, 241-261, and 267-287; these read ILFL…LHFM, AFVI…FLML, SFGI…VIII, TAIG…ISVI, ITSE…LFFI, FLIL…VILV, YVIL…MLLS, and PPGP…FLII.

It belongs to the ABC-3 integral membrane protein family.

It localises to the plastid. It is found in the cyanelle membrane. This is an uncharacterized protein from Cyanophora paradoxa.